The chain runs to 303 residues: N-acetyl-D-glucosamine kinase (303 aa).

ATP is bound by residues 4–11 (GFDIGGTK) and 133–140 (GVGGGLVL). Zn(2+) is bound by residues histidine 157, cysteine 177, cysteine 179, and cysteine 184.

The protein belongs to the ROK (NagC/XylR) family. NagK subfamily.

The enzyme catalyses N-acetyl-D-glucosamine + ATP = N-acetyl-D-glucosamine 6-phosphate + ADP + H(+). Its pathway is cell wall biogenesis; peptidoglycan recycling. Functionally, catalyzes the phosphorylation of N-acetyl-D-glucosamine (GlcNAc) derived from cell-wall degradation, yielding GlcNAc-6-P. The protein is N-acetyl-D-glucosamine kinase of Salmonella paratyphi B (strain ATCC BAA-1250 / SPB7).